Reading from the N-terminus, the 307-residue chain is Beta-lactamase (307 aa).

A signal peptide spans 1-26 (MKLWFSTLKLKKAAAVLLFSCVALAG). Cysteine 27 is lipidated: N-palmitoyl cysteine. Residue cysteine 27 is the site of S-diacylglycerol cysteine attachment. Serine 86 functions as the Acyl-ester intermediate in the catalytic mechanism. The active-site Proton acceptor is the glutamate 182. 248 to 250 (KTG) contributes to the substrate binding site.

This sequence belongs to the class-A beta-lactamase family. In terms of processing, large exopenicillinase is the primary secretion product; it can be converted to small exopenicillinase.

Its subcellular location is the cell membrane. The catalysed reaction is a beta-lactam + H2O = a substituted beta-amino acid. The protein is Beta-lactamase (penP) of Bacillus licheniformis.